A 113-amino-acid polypeptide reads, in one-letter code: Mitochondrial import inner membrane translocase subunit TIM14 (113 aa).

Residues 1-4 (MATP) lie on the Mitochondrial intermembrane side of the membrane. A helical membrane pass occupies residues 5–22 (IIVGATIAGIAYSSRFLI). Over 23 to 113 (RVIQRAKSKQ…RNVLSSKNSN (91 aa)) the chain is Mitochondrial matrix. The J domain occupies 59-113 (EAANILGLKEESTKEEIKIRHKLLMIKNHPDKGGSSYLATKINEARNVLSSKNSN).

Belongs to the TIM14 family. In terms of assembly, interacts with PHB2; the interaction associates DNAJC19 with the prohibitin complex. Interacts with TIMM16/PAM16. May be a component of the PAM complex at least composed of a mitochondrial HSP70 protein, GRPEL1 or GRPEL2, TIMM44, TIMM16/PAM16 and TIMM14/DNAJC19.

The protein localises to the mitochondrion inner membrane. Its function is as follows. Mitochondrial co-chaperone which forms a complex with prohibitins to regulate cardiolipin remodeling. May be a component of the PAM complex, a complex required for the translocation of transit peptide-containing proteins from the inner membrane into the mitochondrial matrix in an ATP-dependent manner. May act as a co-chaperone that stimulate the ATP-dependent activity. This Dictyostelium discoideum (Social amoeba) protein is Mitochondrial import inner membrane translocase subunit TIM14 (dnajc19).